The following is a 210-amino-acid chain: 7-cyano-7-deazaguanine synthase 2 (210 aa).

10–20 lines the ATP pocket; that stretch reads HSGGMDSTTCL. The Zn(2+) site is built by C180, C193, C196, and C199.

Belongs to the QueC family. The cofactor is Zn(2+).

The catalysed reaction is 7-carboxy-7-deazaguanine + NH4(+) + ATP = 7-cyano-7-deazaguanine + ADP + phosphate + H2O + H(+). It participates in purine metabolism; 7-cyano-7-deazaguanine biosynthesis. Its function is as follows. Catalyzes the ATP-dependent conversion of 7-carboxy-7-deazaguanine (CDG) to 7-cyano-7-deazaguanine (preQ(0)). The protein is 7-cyano-7-deazaguanine synthase 2 of Rhodopseudomonas palustris (strain HaA2).